The chain runs to 526 residues: Microphthalmia-associated transcription factor (526 aa).

Residues 1–54 (MQSESGIVPDFEVGEEFHEEPKTYYELKSQPLKSSSSAEHPGASKPPISSSSMT) are disordered. A Phosphoserine; by MTOR modification is found at Ser-5. The span at 15–25 (EEFHEEPKTYY) shows a compositional bias: basic and acidic residues. Residues 41-54 (PGASKPPISSSSMT) show a composition bias toward low complexity. The residue at position 180 (Ser-180) is a Phosphoserine; by MAPK. The interval 224–295 (DDVIDDIISL…PNIKRELTAC (72 aa)) is transactivation. Ser-280 carries the post-translational modification Phosphoserine; by MARK3. Lys-289 participates in a covalent cross-link: Glycyl lysine isopeptide (Lys-Gly) (interchain with G-Cter in SUMO). The bHLH domain occupies 311–364 (QKKDNHNLIERRRRFNINDRIKELGTLIPKSNDPDMRWNKGTILKASVDYIRKL). A coiled-coil region spans residues 355–402 (KASVDYIRKLQREQQRAKELENRQKKLEHANRHLLLRIQELEMQARAH). The segment at 374–395 (LENRQKKLEHANRHLLLRIQEL) is leucine-zipper. The tract at residues 401–431 (AHGLSLIPSTGLCSPDLVNRIIKQEPVLENC) is DNA-binding regulation. Position 405 is a phosphoserine; by GSK3 (Ser-405). A Phosphoserine modification is found at Ser-414. A Glycyl lysine isopeptide (Lys-Gly) (interchain with G-Cter in SUMO) cross-link involves residue Lys-423. Ser-491 is subject to Phosphoserine. The interval 496 to 526 (TDPLLSSVSPGASKTSSRRSSMSMEETEHTC) is disordered. Polar residues predominate over residues 499-509 (LLSSVSPGASK). Ser-516 bears the Phosphoserine; by RPS6KA1 mark.

This sequence belongs to the MiT/TFE family. As to quaternary structure, homodimer or heterodimer; dimerization is mediated via the coiled coil region. Efficient DNA binding requires dimerization with another bHLH protein. Binds DNA in the form of homodimer or heterodimer with either TFE3, TFEB or TFEC. Interacts with small GTPases Rag (RagA/RRAGA, RagB/RRAGB, RagC/RRAGC and/or RagD/RRAGD); promoting its recruitment to lysosomal membrane in the presence of nutrients. Interacts with KARS1. Identified in a complex with HINT1 and CTNNB1. Interacts with VSX2. Post-translationally, when nutrients are present, phosphorylation by MTOR at Ser-5 via non-canonical mTORC1 pathway promotes ubiquitination by the SCF(BTRC) complex, followed by degradation. Phosphorylation at Ser-405 significantly enhances the ability to bind the tyrosinase promoter. Phosphorylation by MARK3/cTAK1 at Ser-280 promotes association with 14-3-3/YWHA adapters and retention in the cytosol. Phosphorylated at Ser-180 and Ser-516 following KIT signaling, triggering a short live activation: Phosphorylation at Ser-180 and Ser-516 by MAPK and RPS6KA1, respectively, activate the transcription factor activity but also promote ubiquitination and subsequent degradation by the proteasome. Phosphorylated in response to blue light (415nm). In terms of processing, ubiquitinated by the SCF(BTRC) and SCF(FBXW11) complexes following phosphorylation ar Ser-5 by MTOR, leading to its degradation by the proteasome. Ubiquitinated following phosphorylation at Ser-180, leading to subsequent degradation by the proteasome. Deubiquitinated by USP13, preventing its degradation. In terms of tissue distribution, expressed in melanocytes (at protein level). As to expression, expressed in the retinal pigment epithelium, brain, and placenta. Expressed in the kidney. Expressed in the kidney and retinal pigment epithelium. In terms of tissue distribution, expressed in the kidney. As to expression, expressed in melanocytes.

Its subcellular location is the nucleus. It localises to the cytoplasm. It is found in the lysosome membrane. Transcription factor that acts as a master regulator of melanocyte survival and differentiation as well as melanosome biogenesis. Binds to M-boxes (5'-TCATGTG-3') and symmetrical DNA sequences (E-boxes) (5'-CACGTG-3') found in the promoter of pigmentation genes, such as tyrosinase (TYR). Involved in the cellular response to amino acid availability by acting downstream of MTOR: in the presence of nutrients, MITF phosphorylation by MTOR promotes its inactivation. Upon starvation or lysosomal stress, inhibition of MTOR induces MITF dephosphorylation, resulting in transcription factor activity. Plays an important role in melanocyte development by regulating the expression of tyrosinase (TYR) and tyrosinase-related protein 1 (TYRP1). Plays a critical role in the differentiation of various cell types, such as neural crest-derived melanocytes, mast cells, osteoclasts and optic cup-derived retinal pigment epithelium. The chain is Microphthalmia-associated transcription factor from Homo sapiens (Human).